Here is an 887-residue protein sequence, read N- to C-terminus: 3-hydroxy-3-methylglutaryl-coenzyme A reductase (887 aa).

At 1–9 (MLSRLFRMH) the chain is on the cytoplasmic side. Residues 10 to 39 (GLFVASHPWEVIVGTVTLTICMMSMNMFTG) form a helical membrane-spanning segment. The Lumenal portion of the chain corresponds to 40–56 (NNKICGWNYECPKFEED). The helical transmembrane segment at 57-78 (VLSSDIIILTITRCIAILYIYF) threads the bilayer. Residues 61–218 (DIIILTITRC…MTFFPACVSL (158 aa)) form the SSD domain. Positions 75-78 (YIYF) match the INSIG-binding motif motif. The Cytoplasmic segment spans residues 79–89 (QFQNLRQLGSK). Residue K89 forms a Glycyl lysine isopeptide (Lys-Gly) (interchain with G-Cter in ubiquitin) linkage. A helical transmembrane segment spans residues 90-114 (YILGIAGLFTIFSSFVFSTVVIHFL). Topologically, residues 115–123 (DKELTGLNE) are lumenal. The chain crosses the membrane as a helical span at residues 124-149 (ALPFFLLLIDLSRASALAKFALSSNS). At 150 to 159 (QDEVRENIAR) the chain is on the cytoplasmic side. A helical membrane pass occupies residues 160–187 (GMAILGPTFTLDALVECLVIGVGTMSGV). The Lumenal portion of the chain corresponds to 188-191 (RQLE). A helical transmembrane segment spans residues 192–220 (IMCCFGCMSVLANYFVFMTFFPACVSLVL). The Cytoplasmic portion of the chain corresponds to 221–248 (ELSRESREGRPIWQLSHFARVLEEEENK). K248 is covalently cross-linked (Glycyl lysine isopeptide (Lys-Gly) (interchain with G-Cter in ubiquitin)). A helical membrane pass occupies residues 249-275 (PNPVTQRVKMIMSLGLVLVHAHSRWIA). Residues 276–314 (DPSPQNSTAEQAKVSLGLDEDVSKRIEPSVSLWQFYLSK) lie on the Lumenal side of the membrane. A glycan (N-linked (GlcNAc...) asparagine) is linked at N281. A helical transmembrane segment spans residues 315 to 339 (MISMDIEQVITLSLAFLLAVKYIFF). Residues 340-887 (EQAETESTLS…LQGTCTKKAA (548 aa)) lie on the Cytoplasmic side of the membrane. Catalysis depends on charge relay system residues E558, K690, and D766. Residue H865 is the Proton donor of the active site. A Phosphoserine modification is found at S871.

This sequence belongs to the HMG-CoA reductase family. In terms of assembly, homotetramer. Homodimer. Interacts (via its SSD) with INSIG1; the interaction, accelerated by sterols, leads to the recruitment of HMGCR to AMFR/gp78 for its ubiquitination by the sterol-mediated ERAD pathway. Interacts with UBIAD1. Undergoes sterol-mediated ubiquitination and ER-associated degradation (ERAD). Accumulation of sterols in the endoplasmic reticulum (ER) membrane, triggers binding of the reductase to the ER membrane protein INSIG1 or INSIG2. The INSIG1 binding leads to the recruitment of the ubiquitin ligase, AMFR/gp78, RNF139 or RNF145, initiating ubiquitination of the reductase. The ubiquitinated reductase is then extracted from the ER membrane and delivered to cytosolic 26S proteosomes by a mechanism probably mediated by the ATPase Valosin-containing protein VCP/p97. The INSIG2-binding leads to the recruitment of the ubiquitin ligase RNF139, initiating ubiquitination of the reductase. Lys-248 is the main site of ubiquitination. Ubiquitination is enhanced by the presence of a geranylgeranylated protein. In terms of processing, N-glycosylated. Deglycosylated by NGLY1 on release from the endoplasmic reticulum (ER) in a sterol-mediated manner. Post-translationally, phosphorylated. Phosphorylation at Ser-871 reduces the catalytic activity.

It localises to the endoplasmic reticulum membrane. The protein localises to the peroxisome membrane. The catalysed reaction is (R)-mevalonate + 2 NADP(+) + CoA = (3S)-3-hydroxy-3-methylglutaryl-CoA + 2 NADPH + 2 H(+). The protein operates within metabolic intermediate biosynthesis; (R)-mevalonate biosynthesis; (R)-mevalonate from acetyl-CoA: step 3/3. With respect to regulation, regulated by a negative feedback mechanism through sterols and non-sterol metabolites derived from mevalonate. Phosphorylation at Ser-871 down-regulates the catalytic activity. Functionally, catalyzes the conversion of (3S)-hydroxy-3-methylglutaryl-CoA (HMG-CoA) to mevalonic acid, the rate-limiting step in the synthesis of cholesterol and other isoprenoids, thus plays a critical role in cellular cholesterol homeostasis. This chain is 3-hydroxy-3-methylglutaryl-coenzyme A reductase (Hmgcr), found in Mus musculus (Mouse).